The primary structure comprises 248 residues: Triosephosphate isomerase (248 aa).

Residues asparagine 10 and lysine 12 each contribute to the substrate site. The active-site Electrophile is histidine 95. Glutamate 165 functions as the Proton acceptor in the catalytic mechanism.

It belongs to the triosephosphate isomerase family. As to quaternary structure, homodimer.

The catalysed reaction is D-glyceraldehyde 3-phosphate = dihydroxyacetone phosphate. It participates in carbohydrate biosynthesis; gluconeogenesis. Its pathway is carbohydrate degradation; glycolysis; D-glyceraldehyde 3-phosphate from glycerone phosphate: step 1/1. The protein is Triosephosphate isomerase (TPI1) of Zygosaccharomyces bailii.